A 43-amino-acid polypeptide reads, in one-letter code: DeltaKappa-actitoxin-Avd4b (43 aa).

3 cysteine pairs are disulfide-bonded: Cys4-Cys39, Cys6-Cys32, and Cys22-Cys40.

Belongs to the sea anemone type 3 (BDS) potassium channel toxin family.

It localises to the secreted. The protein resides in the nematocyst. Acts as a gating modifier on both Kv and Nav ion channels. Voltage-dependently inhibits voltage-gated potassium channels Kv3 (Kv3.1/KCNC1, Kv3.2/KCNC2 and Kv3.4/KCNC4). Slows inactivation of the voltage-gated sodium channel Nav1.7/SCN9A. Inhibits all Kv3.1, Kv3.2 and Kv3.4 by about 50% when tested at a voltage of +40 mV. May act by binding residues in voltage-sensing domains S3b and S4 of Kv3. Tests have been done on human Nav1.7/SCN9A and rat SCG neurons that mostly carry Nav1.7 channels (EC(50)=300 nM). This toxin also reduces blood pressure. This is DeltaKappa-actitoxin-Avd4b from Anemonia sulcata (Mediterranean snakelocks sea anemone).